The chain runs to 217 residues: Thiamine-phosphate synthase (217 aa).

4-amino-2-methyl-5-(diphosphooxymethyl)pyrimidine contacts are provided by residues 38–42 (QYRDK) and N70. Mg(2+) is bound by residues D71 and D90. S109 serves as a coordination point for 4-amino-2-methyl-5-(diphosphooxymethyl)pyrimidine. A 2-[(2R,5Z)-2-carboxy-4-methylthiazol-5(2H)-ylidene]ethyl phosphate-binding site is contributed by 136–138 (SIT). K139 serves as a coordination point for 4-amino-2-methyl-5-(diphosphooxymethyl)pyrimidine. G166 contacts 2-[(2R,5Z)-2-carboxy-4-methylthiazol-5(2H)-ylidene]ethyl phosphate.

The protein belongs to the thiamine-phosphate synthase family. It depends on Mg(2+) as a cofactor.

The enzyme catalyses 2-[(2R,5Z)-2-carboxy-4-methylthiazol-5(2H)-ylidene]ethyl phosphate + 4-amino-2-methyl-5-(diphosphooxymethyl)pyrimidine + 2 H(+) = thiamine phosphate + CO2 + diphosphate. It carries out the reaction 2-(2-carboxy-4-methylthiazol-5-yl)ethyl phosphate + 4-amino-2-methyl-5-(diphosphooxymethyl)pyrimidine + 2 H(+) = thiamine phosphate + CO2 + diphosphate. The catalysed reaction is 4-methyl-5-(2-phosphooxyethyl)-thiazole + 4-amino-2-methyl-5-(diphosphooxymethyl)pyrimidine + H(+) = thiamine phosphate + diphosphate. It functions in the pathway cofactor biosynthesis; thiamine diphosphate biosynthesis; thiamine phosphate from 4-amino-2-methyl-5-diphosphomethylpyrimidine and 4-methyl-5-(2-phosphoethyl)-thiazole: step 1/1. Functionally, condenses 4-methyl-5-(beta-hydroxyethyl)thiazole monophosphate (THZ-P) and 2-methyl-4-amino-5-hydroxymethyl pyrimidine pyrophosphate (HMP-PP) to form thiamine monophosphate (TMP). This chain is Thiamine-phosphate synthase, found in Nitrosococcus oceani (strain ATCC 19707 / BCRC 17464 / JCM 30415 / NCIMB 11848 / C-107).